The sequence spans 67 residues: Probable Sec-independent protein translocase protein TatE (67 aa).

Residues 1–21 (MEGISIAKLLIIGALIVLLFG) traverse the membrane as a helical segment. The tract at residues 46-67 (EDTSATRTTAEDVPAERVVHKD) is disordered.

The protein belongs to the TatA/E family. TatE subfamily.

The protein localises to the cell inner membrane. Part of the twin-arginine translocation (Tat) system that transports large folded proteins containing a characteristic twin-arginine motif in their signal peptide across membranes. TatE shares overlapping functions with TatA. The protein is Probable Sec-independent protein translocase protein TatE of Pantoea vagans (strain C9-1) (Pantoea agglomerans (strain C9-1)).